Here is a 239-residue protein sequence, read N- to C-terminus: DNA repair protein RecO (239 aa).

It belongs to the RecO family.

Its function is as follows. Involved in DNA repair and RecF pathway recombination. This is DNA repair protein RecO from Aromatoleum aromaticum (strain DSM 19018 / LMG 30748 / EbN1) (Azoarcus sp. (strain EbN1)).